The chain runs to 234 residues: Melanoregulin (234 aa).

The tract at residues 215–234 (MNQNISGGEDEDEDESEPDD) is disordered. Over residues 222–234 (GEDEDEDESEPDD) the composition is skewed to acidic residues.

It belongs to the melanoregulin family.

It is found in the apical cell membrane. Its subcellular location is the melanosome membrane. It localises to the lysosome membrane. The protein resides in the cytoplasmic vesicle membrane. Its function is as follows. Probably functions as a cargo-recognition protein that couples cytoplasmic vesicles to the transport machinery. Contributes to retrograde melanosome transport from the cell periphery to the center. Overexpression causes accumulation of late endosomes and/or lysosomes at the microtubule organising center (MTOC) at the center of the cell. Probably binds cholesterol and requires the presence of cholesterol in membranes to function in microtubule-mediated retrograde organelle transport. Binds phosphatidylinositol 3-phosphate, phosphatidylinositol 4-phosphate, phosphatidylinositol 5-phosphate and phosphatidylinositol 3,5-bisphosphate. In Danio rerio (Zebrafish), this protein is Melanoregulin (mreg).